We begin with the raw amino-acid sequence, 252 residues long: Phosphate import ATP-binding protein PstB (252 aa).

The ABC transporter domain occupies I6–I247. G38–S45 lines the ATP pocket.

It belongs to the ABC transporter superfamily. Phosphate importer (TC 3.A.1.7) family. The complex is composed of two ATP-binding proteins (PstB), two transmembrane proteins (PstC and PstA) and a solute-binding protein (PstS).

The protein resides in the cell membrane. The enzyme catalyses phosphate(out) + ATP + H2O = ADP + 2 phosphate(in) + H(+). In terms of biological role, part of the ABC transporter complex PstSACB involved in phosphate import. Responsible for energy coupling to the transport system. The protein is Phosphate import ATP-binding protein PstB of Methanosphaera stadtmanae (strain ATCC 43021 / DSM 3091 / JCM 11832 / MCB-3).